The primary structure comprises 172 residues: Crossover junction endodeoxyribonuclease RuvC (172 aa).

Residues Asp-8, Glu-67, and Asp-139 contribute to the active site. Asp-8, Glu-67, and Asp-139 together coordinate Mg(2+).

The protein belongs to the RuvC family. In terms of assembly, homodimer which binds Holliday junction (HJ) DNA. The HJ becomes 2-fold symmetrical on binding to RuvC with unstacked arms; it has a different conformation from HJ DNA in complex with RuvA. In the full resolvosome a probable DNA-RuvA(4)-RuvB(12)-RuvC(2) complex forms which resolves the HJ. Requires Mg(2+) as cofactor.

Its subcellular location is the cytoplasm. The catalysed reaction is Endonucleolytic cleavage at a junction such as a reciprocal single-stranded crossover between two homologous DNA duplexes (Holliday junction).. Functionally, the RuvA-RuvB-RuvC complex processes Holliday junction (HJ) DNA during genetic recombination and DNA repair. Endonuclease that resolves HJ intermediates. Cleaves cruciform DNA by making single-stranded nicks across the HJ at symmetrical positions within the homologous arms, yielding a 5'-phosphate and a 3'-hydroxyl group; requires a central core of homology in the junction. The consensus cleavage sequence is 5'-(A/T)TT(C/G)-3'. Cleavage occurs on the 3'-side of the TT dinucleotide at the point of strand exchange. HJ branch migration catalyzed by RuvA-RuvB allows RuvC to scan DNA until it finds its consensus sequence, where it cleaves and resolves the cruciform DNA. This Hahella chejuensis (strain KCTC 2396) protein is Crossover junction endodeoxyribonuclease RuvC.